Reading from the N-terminus, the 484-residue chain is uncharacterized protein (484 aa).

Residues 25–45 (PLSLFVVLAAVPLPIYFSGLL) traverse the membrane as a helical segment. The EF-hand domain occupies 384–419 (LSFEETKELWVRADLDGNGVFDYEELKKIWNMTMVN). Residues D397, D399, N401, and E408 each coordinate Ca(2+).

It localises to the membrane. This is an uncharacterized protein from Arabidopsis thaliana (Mouse-ear cress).